The primary structure comprises 209 residues: Uracil phosphoribosyltransferase (209 aa).

5-phospho-alpha-D-ribose 1-diphosphate contacts are provided by residues arginine 79, arginine 104, and aspartate 131–serine 139. Uracil contacts are provided by residues isoleucine 194 and glycine 199–alanine 201. A 5-phospho-alpha-D-ribose 1-diphosphate-binding site is contributed by aspartate 200.

Belongs to the UPRTase family. The cofactor is Mg(2+).

It carries out the reaction UMP + diphosphate = 5-phospho-alpha-D-ribose 1-diphosphate + uracil. The protein operates within pyrimidine metabolism; UMP biosynthesis via salvage pathway; UMP from uracil: step 1/1. With respect to regulation, allosterically activated by GTP. Catalyzes the conversion of uracil and 5-phospho-alpha-D-ribose 1-diphosphate (PRPP) to UMP and diphosphate. The sequence is that of Uracil phosphoribosyltransferase from Polaromonas naphthalenivorans (strain CJ2).